The following is a 551-amino-acid chain: Periplasmic [NiFe] hydrogenase large subunit (551 aa).

Ni(2+) is bound by residues Cys65, Cys68, Cys530, and Cys533. The propeptide occupies 537–551 (VIDPESNQVHKFRIL).

This sequence belongs to the [NiFe]/[NiFeSe] hydrogenase large subunit family. As to quaternary structure, heterodimer of a large and a small subunit. Ni(2+) is required as a cofactor.

It is found in the periplasm. It carries out the reaction 2 Fe(III)-[cytochrome c3] + H2 = 2 Fe(II)-[cytochrome c3] + 2 H(+). This is Periplasmic [NiFe] hydrogenase large subunit (hydB) from Megalodesulfovibrio gigas (Desulfovibrio gigas).